Here is a 423-residue protein sequence, read N- to C-terminus: Putative competence-damage inducible protein (423 aa).

Belongs to the CinA family.

The sequence is that of Putative competence-damage inducible protein from Streptococcus pyogenes serotype M3 (strain ATCC BAA-595 / MGAS315).